We begin with the raw amino-acid sequence, 141 residues long: ATP synthase F(0) complex subunit C2, mitochondrial (141 aa).

Residues 1–66 (MFACSKFVST…RSFQTSAISR (66 aa)) constitute a mitochondrion transit peptide. Residues 82-102 (VGVAGSGAGIGTVFGSLIIGY) traverse the membrane as a helical segment. N6,N6,N6-trimethyllysine is present on lysine 109. A helical membrane pass occupies residues 117-137 (ILGFALSEAMGLFCLMVAFLI).

The protein belongs to the ATPase C chain family. F-type ATPases have 2 components, CF(1) - the catalytic core - and CF(0) - the membrane proton channel. CF(1) has five subunits: alpha(3), beta(3), gamma(1), delta(1), epsilon(1). CF(0) has three main subunits: a, b and c. Interacts with DNAJC30; interaction is direct. In terms of processing, trimethylated by ATPSCKMT at Lys-109. Methylation is required for proper incorporation of the C subunit into the ATP synthase complex and mitochondrial respiration.

It is found in the mitochondrion membrane. Its function is as follows. Mitochondrial membrane ATP synthase (F(1)F(0) ATP synthase or Complex V) produces ATP from ADP in the presence of a proton gradient across the membrane which is generated by electron transport complexes of the respiratory chain. F-type ATPases consist of two structural domains, F(1) - containing the extramembraneous catalytic core and F(0) - containing the membrane proton channel, linked together by a central stalk and a peripheral stalk. During catalysis, ATP synthesis in the catalytic domain of F(1) is coupled via a rotary mechanism of the central stalk subunits to proton translocation. Part of the complex F(0) domain. A homomeric c-ring of probably 10 subunits is part of the complex rotary element. This chain is ATP synthase F(0) complex subunit C2, mitochondrial, found in Homo sapiens (Human).